A 79-amino-acid polypeptide reads, in one-letter code: Sulfur carrier protein TusA (79 aa).

Residue cysteine 17 is the Cysteine persulfide intermediate of the active site.

Belongs to the sulfur carrier protein TusA family.

It localises to the cytoplasm. Its function is as follows. Sulfur carrier protein which probably makes part of a sulfur-relay system. The sequence is that of Sulfur carrier protein TusA from Haemophilus ducreyi (strain 35000HP / ATCC 700724).